Consider the following 162-residue polypeptide: MTAIQHFFKTFFLTELLKGLALTGRYTFKRKFTVQFPEEKTPISPRFRGLHALRRYENGEERCIACKLCEAVCPALAITIESETRADNTRRTTRYDIDLTKCIFCGFCEESCPVDSIVETQILEYHGEKRGDLYFTKDMLLAVGDRYEKDIAAAKAADAPYR.

4Fe-4S ferredoxin-type domains are found at residues 54–83 (RRYE…IESE) and 93–122 (TRYD…ETQI). The [4Fe-4S] cluster site is built by Cys63, Cys66, Cys69, Cys73, Cys102, Cys105, Cys108, and Cys112.

Belongs to the complex I 23 kDa subunit family. NDH-1 is composed of 14 different subunits. Subunits NuoA, H, J, K, L, M, N constitute the membrane sector of the complex. [4Fe-4S] cluster serves as cofactor.

It localises to the cell inner membrane. It carries out the reaction a quinone + NADH + 5 H(+)(in) = a quinol + NAD(+) + 4 H(+)(out). Its function is as follows. NDH-1 shuttles electrons from NADH, via FMN and iron-sulfur (Fe-S) centers, to quinones in the respiratory chain. The immediate electron acceptor for the enzyme in this species is believed to be ubiquinone. Couples the redox reaction to proton translocation (for every two electrons transferred, four hydrogen ions are translocated across the cytoplasmic membrane), and thus conserves the redox energy in a proton gradient. The polypeptide is NADH-quinone oxidoreductase subunit I (Burkholderia cenocepacia (strain ATCC BAA-245 / DSM 16553 / LMG 16656 / NCTC 13227 / J2315 / CF5610) (Burkholderia cepacia (strain J2315))).